Here is a 90-residue protein sequence, read N- to C-terminus: Translation initiation factor IF-1 (90 aa).

The S1-like domain occupies lysine 15–lysine 90.

This sequence belongs to the IF-1 family. Component of the 30S ribosomal translation pre-initiation complex which assembles on the 30S ribosome in the order IF-2 and IF-3, IF-1 and N-formylmethionyl-tRNA(fMet); mRNA recruitment can occur at any time during PIC assembly.

Its subcellular location is the cytoplasm. In terms of biological role, one of the essential components for the initiation of protein synthesis. Stabilizes the binding of IF-2 and IF-3 on the 30S subunit to which N-formylmethionyl-tRNA(fMet) subsequently binds. Helps modulate mRNA selection, yielding the 30S pre-initiation complex (PIC). Upon addition of the 50S ribosomal subunit IF-1, IF-2 and IF-3 are released leaving the mature 70S translation initiation complex. In Mycoplasma sp, this protein is Translation initiation factor IF-1.